A 279-amino-acid polypeptide reads, in one-letter code: Oxygen-dependent coproporphyrinogen-III oxidase (279 aa).

Residue S102 coordinates substrate. Positions 106 and 116 each coordinate a divalent metal cation. H116 serves as the catalytic Proton donor. N118–R120 contributes to the substrate binding site. Positions 149 and 179 each coordinate a divalent metal cation. The segment at Y244–N279 is important for dimerization.

The protein belongs to the aerobic coproporphyrinogen-III oxidase family. As to quaternary structure, homodimer. Requires a divalent metal cation as cofactor.

It is found in the cytoplasm. The enzyme catalyses coproporphyrinogen III + O2 + 2 H(+) = protoporphyrinogen IX + 2 CO2 + 2 H2O. Its pathway is porphyrin-containing compound metabolism; protoporphyrin-IX biosynthesis; protoporphyrinogen-IX from coproporphyrinogen-III (O2 route): step 1/1. In terms of biological role, involved in the heme biosynthesis. Catalyzes the aerobic oxidative decarboxylation of propionate groups of rings A and B of coproporphyrinogen-III to yield the vinyl groups in protoporphyrinogen-IX. The protein is Oxygen-dependent coproporphyrinogen-III oxidase of Rickettsia conorii (strain ATCC VR-613 / Malish 7).